The sequence spans 142 residues: Transcriptional regulator MraZ (142 aa).

SpoVT-AbrB domains follow at residues 5–51 (ASSL…PRPE) and 77–120 (AMDV…DKAT).

The protein belongs to the MraZ family. Forms oligomers.

It localises to the cytoplasm. Its subcellular location is the nucleoid. The protein is Transcriptional regulator MraZ of Acidovorax ebreus (strain TPSY) (Diaphorobacter sp. (strain TPSY)).